We begin with the raw amino-acid sequence, 256 residues long: E3 ubiquitin-protein ligase MIR2 (256 aa).

Over 1-83 the chain is Cytoplasmic; sequence MASKDVEEGV…NLWPEMERQE (83 aa). The RING-CH-type zinc-finger motif lies at 7 to 66; the sequence is EEGVEGPICWICREEVGNEGIHPCACTGELDVVHPQCLSTWLTVSRNTACQMCRVIYRTR. Zn(2+) is bound by residues Cys-15, Cys-18, Cys-30, Cys-32, His-40, Cys-43, Cys-56, and Cys-59. A helical membrane pass occupies residues 84 to 104; it reads IFELFLLMSVVVAGLVGVALC. The Extracellular segment spans residues 105–124; it reads TWTLLVILTAPAGTFSPGAV. The helical transmembrane segment at 125 to 145 threads the bilayer; the sequence is LGFLCFFGFYQIFIVFAFGGI. The Cytoplasmic portion of the chain corresponds to 146–256; it reads CRVSGTVRAL…VRKNHPKNNG (111 aa). Residues 179–256 form a disordered region; it reads DNIELTVLVG…VRKNHPKNNG (78 aa). Acidic residues predominate over residues 193–203; it reads TDEEPTDESSE. Basic residues predominate over residues 245-256; that stretch reads KPVRKNHPKNNG.

As to quaternary structure, binds human MHC-I, CD86, ICAM1 and CD1D.

It is found in the host cell membrane. The protein resides in the host endoplasmic reticulum. The catalysed reaction is S-ubiquitinyl-[E2 ubiquitin-conjugating enzyme]-L-cysteine + [acceptor protein]-L-lysine = [E2 ubiquitin-conjugating enzyme]-L-cysteine + N(6)-ubiquitinyl-[acceptor protein]-L-lysine.. It functions in the pathway protein modification; protein ubiquitination. Functionally, membrane-bound E3 ubiquitin ligase expressed at the immediate early stage of viral reactivation to mediate polyubiquitination of various host membrane proteins related to the immune response. Promotes ubiquitination and subsequent degradation of host MHC-I, CD86, DC-SIGN and DC-SIGNR, ICAM1 and CD1D molecules, presumably to prevent lysis of infected cells by cytotoxic T-lymphocytes and NK cell. Plays a role in the down-regulation of the host stress-induced NKG2D ligands MICA, MICB and CLEC2B, which enable immune cells expressing the NKG2D receptor to recognize and annihilate infected cells prior to viral spread. Alters monocyte metabolism and proliferation by mediating rapid internalization of cellular growth factor-binding receptor tyrosine kinases from the surface leading to increased signaling. The chain is E3 ubiquitin-protein ligase MIR2 (K5) from Homo sapiens (Human).